Here is a 313-residue protein sequence, read N- to C-terminus: Nucleotide-binding protein Swit_0399 (313 aa).

Residue 20–27 (GMSGSGKK) coordinates ATP. GTP is bound at residue 73–76 (DSRT). A disordered region spans residues 289-313 (PTVRHRDLTRQKSNAEESTVPGVGS). Over residues 292–303 (RHRDLTRQKSNA) the composition is skewed to basic and acidic residues.

Belongs to the RapZ-like family.

Its function is as follows. Displays ATPase and GTPase activities. In Rhizorhabdus wittichii (strain DSM 6014 / CCUG 31198 / JCM 15750 / NBRC 105917 / EY 4224 / RW1) (Sphingomonas wittichii), this protein is Nucleotide-binding protein Swit_0399.